A 239-amino-acid polypeptide reads, in one-letter code: Superoxide dismutase [Mn] 3 (239 aa).

Over residues 1 to 19 the composition is skewed to polar residues; that stretch reads ASTQQTPAQSPTASPTVST. Positions 1-20 are disordered; sequence ASTQQTPAQSPTASPTVSTP. The signal sequence occupies residues 1 to 30; sequence ASTQQTPAQSPTASPTVSTPVAYVDRPLTA. Mn(2+) is bound by residues histidine 57, histidine 112, aspartate 195, and histidine 199.

Belongs to the iron/manganese superoxide dismutase family. In terms of assembly, homodimer. Mn(2+) serves as cofactor.

The catalysed reaction is 2 superoxide + 2 H(+) = H2O2 + O2. Functionally, destroys superoxide anion radicals which are normally produced within the cells and which are toxic to biological systems. This Leptolyngbya boryana (Plectonema boryanum) protein is Superoxide dismutase [Mn] 3 (sodA3).